A 468-amino-acid polypeptide reads, in one-letter code: 6-phospho-beta-galactosidase 2 (468 aa).

D-galactose 6-phosphate-binding residues include glutamine 19, histidine 116, asparagine 159, glutamate 160, and asparagine 297. Catalysis depends on glutamate 160, which acts as the Proton donor. Catalysis depends on glutamate 375, which acts as the Nucleophile. D-galactose 6-phosphate-binding residues include serine 428, tryptophan 429, lysine 435, and tyrosine 437.

The protein belongs to the glycosyl hydrolase 1 family.

The enzyme catalyses a 6-phospho-beta-D-galactoside + H2O = D-galactose 6-phosphate + an alcohol. Its pathway is carbohydrate metabolism; lactose degradation; D-galactose 6-phosphate and beta-D-glucose from lactose 6-phosphate: step 1/1. This Streptococcus pneumoniae (strain ATCC BAA-255 / R6) protein is 6-phospho-beta-galactosidase 2.